The chain runs to 86 residues: Muscarinic toxin-like protein (86 aa).

Positions 1 to 21 (MKTLLLTLAVVTMVCMDLGYT) are cleaved as a signal peptide. Intrachain disulfides connect C24–C45, C38–C62, C66–C78, and C79–C84.

This sequence belongs to the three-finger toxin family. Short-chain subfamily. Orphan group VIII (haditoxin) sub-subfamily. In terms of assembly, homodimer; non-covalently linked. As to expression, expressed by the venom gland.

The protein localises to the secreted. Antagonist of muscle and neuronal nicotinic acetylcholine receptors (nAChR) with highest affinity for neuronal alpha-7/CHRNA7 nAChRs. In Bungarus multicinctus (Many-banded krait), this protein is Muscarinic toxin-like protein.